The following is a 1465-amino-acid chain: DNA polymerase III polC-type (1465 aa).

The Exonuclease domain occupies 427-583 (YVVFDVETTG…YDAEATGRLL (157 aa)).

It belongs to the DNA polymerase type-C family. PolC subfamily.

It localises to the cytoplasm. It carries out the reaction DNA(n) + a 2'-deoxyribonucleoside 5'-triphosphate = DNA(n+1) + diphosphate. In terms of biological role, required for replicative DNA synthesis. This DNA polymerase also exhibits 3' to 5' exonuclease activity. The polypeptide is DNA polymerase III polC-type (Streptococcus pyogenes serotype M3 (strain ATCC BAA-595 / MGAS315)).